We begin with the raw amino-acid sequence, 307 residues long: Protein phosphatase EYA (307 aa).

Positions 1-15 (MNNDTSKKLGTLVSD) are necessary for optimum phosphatase activity. Asp-25 functions as the Nucleophile in the catalytic mechanism. 3 residues coordinate Mg(2+): Asp-25, Asp-27, and Asp-253. The Proton donor role is filled by Asp-27.

The protein belongs to the HAD-like hydrolase superfamily. EYA family. Requires Mg(2+) as cofactor.

The enzyme catalyses O-phospho-L-tyrosyl-[protein] + H2O = L-tyrosyl-[protein] + phosphate. With respect to regulation, inhibited by EDTA. Its function is as follows. Possesses phosphatase activity toward para-nitrophenyl phosphate (pNPP) in vitro. Possesses phosphatase activity toward several phosphotyrosine-containing peptides in vitro, with low peptide substrate specificity. In Arabidopsis thaliana (Mouse-ear cress), this protein is Protein phosphatase EYA.